We begin with the raw amino-acid sequence, 152 residues long: Large ribosomal subunit protein uL13 (152 aa).

This sequence belongs to the universal ribosomal protein uL13 family. In terms of assembly, part of the 50S ribosomal subunit.

This protein is one of the early assembly proteins of the 50S ribosomal subunit, although it is not seen to bind rRNA by itself. It is important during the early stages of 50S assembly. The polypeptide is Large ribosomal subunit protein uL13 (Borreliella afzelii (strain PKo) (Borrelia afzelii)).